The primary structure comprises 158 residues: Transcription elongation factor GreA (158 aa).

Residues 4–75 (QKQYPMTQEG…QRVENMLRNA (72 aa)) adopt a coiled-coil conformation.

This sequence belongs to the GreA/GreB family.

Necessary for efficient RNA polymerase transcription elongation past template-encoded arresting sites. The arresting sites in DNA have the property of trapping a certain fraction of elongating RNA polymerases that pass through, resulting in locked ternary complexes. Cleavage of the nascent transcript by cleavage factors such as GreA or GreB allows the resumption of elongation from the new 3'terminus. GreA releases sequences of 2 to 3 nucleotides. This is Transcription elongation factor GreA from Staphylococcus saprophyticus subsp. saprophyticus (strain ATCC 15305 / DSM 20229 / NCIMB 8711 / NCTC 7292 / S-41).